Consider the following 187-residue polypeptide: ECF RNA polymerase sigma factor SigK (187 aa).

Residues 30 to 96 (YDHTKSRVYG…RAVDRVRCEQ (67 aa)) form a sigma-70 factor domain-2 region. Residues 53–56 (ETTQ) carry the Interaction with polymerase core subunit RpoC motif. The segment at 133 to 182 (CLKALTDTQRQCIELAYYGGLTYVEVSRRLAANLSTIKSRMRDALRSLRN) is sigma-70 factor domain-4. The segment at residues 155 to 174 (YVEVSRRLAANLSTIKSRMR) is a DNA-binding region (H-T-H motif).

It belongs to the sigma-70 factor family. ECF subfamily. As to quaternary structure, interacts transiently with the RNA polymerase catalytic core formed by RpoA, RpoB, RpoC and RpoZ (2 alpha, 1 beta, 1 beta' and 1 omega subunit) to form the RNA polymerase holoenzyme that can initiate transcription. Interacts (via sigma-70 factor domain 4) with anti-sigma-K factor RskA.

Functionally, sigma factors are initiation factors that promote the attachment of RNA polymerase to specific initiation sites and are then released. Extracytoplasmic function (ECF) sigma factors are held in an inactive form by an anti-sigma factor until released by regulated intramembrane proteolysis. The polypeptide is ECF RNA polymerase sigma factor SigK (sigK) (Mycobacterium tuberculosis (strain ATCC 25177 / H37Ra)).